The chain runs to 322 residues: tRNA U34 carboxymethyltransferase (322 aa).

Carboxy-S-adenosyl-L-methionine is bound by residues Lys-90, Trp-104, Lys-109, Gly-129, 151–153, 179–180, Met-195, Tyr-199, and Arg-314; these read DPT and ME.

It belongs to the class I-like SAM-binding methyltransferase superfamily. CmoB family. Homotetramer.

The enzyme catalyses carboxy-S-adenosyl-L-methionine + 5-hydroxyuridine(34) in tRNA = 5-carboxymethoxyuridine(34) in tRNA + S-adenosyl-L-homocysteine + H(+). Functionally, catalyzes carboxymethyl transfer from carboxy-S-adenosyl-L-methionine (Cx-SAM) to 5-hydroxyuridine (ho5U) to form 5-carboxymethoxyuridine (cmo5U) at position 34 in tRNAs. This chain is tRNA U34 carboxymethyltransferase, found in Alcanivorax borkumensis (strain ATCC 700651 / DSM 11573 / NCIMB 13689 / SK2).